A 376-amino-acid chain; its full sequence is MASPKLHDFRHIVVKVGSSLLIDSAAGEVRAGWLAALAADIAELHRGGRDVMVVSSGSIALGRSRLKLPRGPLKLEESQAAAAVGQIELARTWSEVLGAHGIGAGQILVTFQDTEERRRYLNARSTIAKLLEWRAVPVINENDTVATTEIRYGDNDRLAARVATMASADLLILLSDIDGLYTAPPGSNPDATLIPVVEAITAEIEGMAGAAGSELSRGGMRTKIEAAKIATSAGTHMLIASGKIDHPLKAIADGGKCTWFLTPANPVTARKRWIAGTLEPKGTLTIDAGAVSALRAGKSLLPAGVIRVDGQFSRGDAVIVRGPDTHEIGRGLVAYDAEDAEKIKGHSSPDVMMILGITGRAEMIHRDDLVVGTAPT.

Position 15 (K15) interacts with ATP. Positions 56, 143, and 155 each coordinate substrate. ATP is bound at residue 175–176 (SD). The region spanning 281-358 (KGTLTIDAGA…PDVMMILGIT (78 aa)) is the PUA domain.

This sequence belongs to the glutamate 5-kinase family.

It is found in the cytoplasm. It carries out the reaction L-glutamate + ATP = L-glutamyl 5-phosphate + ADP. It functions in the pathway amino-acid biosynthesis; L-proline biosynthesis; L-glutamate 5-semialdehyde from L-glutamate: step 1/2. Its function is as follows. Catalyzes the transfer of a phosphate group to glutamate to form L-glutamate 5-phosphate. The sequence is that of Glutamate 5-kinase from Rhodopseudomonas palustris (strain ATCC BAA-98 / CGA009).